Here is a 132-residue protein sequence, read N- to C-terminus: Sec-independent protein translocase protein TatB (132 aa).

A helical membrane pass occupies residues 2-22 (FDGIGFMELLLIGILGLVVLG). Positions 86-132 (LKSAAQSVNRPYKVEDISPASSSAPVDPAPTETKTAETSANSEKPNG) are disordered. The segment covering 103-115 (SPASSSAPVDPAP) has biased composition (low complexity). The segment covering 117–132 (ETKTAETSANSEKPNG) has biased composition (polar residues).

It belongs to the TatB family. In terms of assembly, the Tat system comprises two distinct complexes: a TatABC complex, containing multiple copies of TatA, TatB and TatC subunits, and a separate TatA complex, containing only TatA subunits. Substrates initially bind to the TatABC complex, which probably triggers association of the separate TatA complex to form the active translocon.

The protein resides in the cell inner membrane. Part of the twin-arginine translocation (Tat) system that transports large folded proteins containing a characteristic twin-arginine motif in their signal peptide across membranes. Together with TatC, TatB is part of a receptor directly interacting with Tat signal peptides. TatB may form an oligomeric binding site that transiently accommodates folded Tat precursor proteins before their translocation. The polypeptide is Sec-independent protein translocase protein TatB (Shewanella sediminis (strain HAW-EB3)).